Here is a 785-residue protein sequence, read N- to C-terminus: Ubiquitin carboxyl-terminal hydrolase 1 (785 aa).

2 disordered regions span residues 1–21 (MPGVIPSESNGLSRGSPSKKN) and 33–52 (TKRALDFTDSQENEEKASEY). Positions 7-16 (SESNGLSRGS) are enriched in polar residues. Phosphoserine is present on residues S16, S42, and S67. One can recognise a USP domain in the interval 81-785 (VGLNNLGNTC…TPYLLFYKKL (705 aa)). Catalysis depends on C90, which acts as the Nucleophile. 2 stretches are compositionally biased toward basic and acidic residues: residues 258–275 (EDFKEKLPKGNGKRKSDT) and 286–298 (LSKEHQSLEENQR). Residues 258–336 (EDFKEKLPKG…SPRPSQKKSR (79 aa)) form a disordered region. A phosphoserine mark is found at S313 and S475. Catalysis depends on H593, which acts as the Proton acceptor. The interval 693–723 (TAFAENRNSETSDTTGTHESDRNKESSDQTG) is disordered. Residues 708–719 (GTHESDRNKESS) show a composition bias toward basic and acidic residues. The residue at position 768 (S768) is a Phosphoserine.

The protein belongs to the peptidase C19 family. As to quaternary structure, interacts with FANCD2 and PCNA. Interacts with WDR48. Interacts with ATAD5; the interaction regulates USP1-mediated PCNA deubiquitination. Post-translationally, autocatalytic cleavage of USP1 following UV irradiation inactivates it, leading to an increase in ubiquitinated PCNA, recruitment of POLH and translesion synthesis. In terms of processing, ubiquitinated by the CRL2(KLHDC2) complex following autocatalytic cleavage, leading to its degradation: the CRL2(KLHDC2) complex recognizes the diglycine (Gly-Gly) at the C-terminus.

It localises to the nucleus. It catalyses the reaction Thiol-dependent hydrolysis of ester, thioester, amide, peptide and isopeptide bonds formed by the C-terminal Gly of ubiquitin (a 76-residue protein attached to proteins as an intracellular targeting signal).. In terms of biological role, negative regulator of DNA damage repair which specifically deubiquitinates monoubiquitinated FANCD2. Also involved in PCNA-mediated translesion synthesis (TLS) by deubiquitinating monoubiquitinated PCNA. Has almost no deubiquitinating activity by itself and requires the interaction with WDR48 to have a high activity. In Homo sapiens (Human), this protein is Ubiquitin carboxyl-terminal hydrolase 1 (USP1).